The following is a 396-amino-acid chain: Putative arsenical pump-driving ATPase 1 (396 aa).

8 to 15 (GKGGVGKT) is an ATP binding site.

It belongs to the arsA ATPase family.

The catalysed reaction is arsenite(in) + ATP + H2O = arsenite(out) + ADP + phosphate + H(+). In terms of biological role, anion-transporting ATPase. Catalyzes the extrusion of arsenite. The chain is Putative arsenical pump-driving ATPase 1 (arsA1) from Aquifex aeolicus (strain VF5).